Here is a 76-residue protein sequence, read N- to C-terminus: Neuromacin-like protein (76 aa).

Intrachain disulfides connect cysteine 18–cysteine 25, cysteine 40–cysteine 44, cysteine 54–cysteine 61, and cysteine 72–cysteine 74.

This sequence belongs to the macin family.

Its subcellular location is the secreted. The polypeptide is Neuromacin-like protein (Aplysia californica (California sea hare)).